We begin with the raw amino-acid sequence, 594 residues long: Probable translation initiation factor IF-2 (594 aa).

Residues 3–220 (IRSPIVSVLG…MLMGLAQQYL (218 aa)) form the tr-type G domain. Residues 12–19 (GHVDHGKT) are G1. 12 to 19 (GHVDHGKT) contributes to the GTP binding site. Positions 37–41 (GITQH) are G2. The tract at residues 76-79 (DTPG) is G3. Residues 76–80 (DTPGH) and 130–133 (NKID) each bind GTP. Residues 130-133 (NKID) are G4. Residues 198 to 200 (SAI) form a G5 region.

Belongs to the TRAFAC class translation factor GTPase superfamily. Classic translation factor GTPase family. IF-2 subfamily.

Its function is as follows. Function in general translation initiation by promoting the binding of the formylmethionine-tRNA to ribosomes. Seems to function along with eIF-2. The protein is Probable translation initiation factor IF-2 (infB) of Methanothermobacter thermautotrophicus (strain ATCC 29096 / DSM 1053 / JCM 10044 / NBRC 100330 / Delta H) (Methanobacterium thermoautotrophicum).